The following is a 755-amino-acid chain: MNVIYFPLHIFVVYSRAYTSLVLVGCTNLCAVLFARCLDDHLVSLRMSGSRKEFDVKQILKIRWRWFGHQASSPNSTVDSQQGEFWNRGQTGANGGRKFLDPCSLQLPLASIGYRRSSQLDFQNSPSWPMASTSEVPAFEFTAEDCGGAHWLDRPEVDDGTSEEENESDSSSCRTSNSSQTLSSCHTMEPCTSDEFFQALNHAEQTFKKMENYLRHKQLCDVILVAGDRRIPAHRLVLSSVSDYFAAMFTNDVREARQEEIKMEGVEPNSLWSLIQYAYTGRLELKEDNIECLLSTACLLQLSQVVEACCKFLMKQLHPSNCLGIRSFADAQGCTDLHKVAHNYTMEHFMEVIRNQEFVLLPASEIAKLLASDDMNIPNEETILNALLTWVRHDLEQRRKDLSKLLAYIRLPLLAPQFLADMENNVLFRDDIECQKLIMEAMKYHLLPERRPMLQSPRTKPRKSTVGTLFAVGGMDSTKGATSIEKYDLRTNMWTPVANMNGRRLQFGVAVLDDKLYVVGGRDGLKTLNTVECYNPKTKTWSVMPPMSTHRHGLGVAVLEGPMYAVGGHDGWSYLNTVERWDPQARQWNFVATMSTPRSTVGVAVLSGKLYAVGGRDGSSCLKSVECFDPHTNKWTLCAQMSKRRGGVGVTTWNGLLYAIGGHDAPASNLTSRLSDCVERYDPKTDMWTAVASMSISRDAVGVCLLGDKLYAVGGYDGQAYLNTVEAYDPQTNEWTQVAPLCLGRAGACVVTVKL.

The interval 152-184 (LDRPEVDDGTSEEENESDSSSCRTSNSSQTLSS) is disordered. Acidic residues predominate over residues 158-168 (DDGTSEEENES). The segment covering 169–184 (DSSSCRTSNSSQTLSS) has biased composition (low complexity). The region spanning 220-287 (CDVILVAGDR…AYTGRLELKE (68 aa)) is the BTB domain. 6 Kelch repeats span residues 468-514 (TLFA…VLDD), 515-561 (KLYV…VLEG), 563-608 (MYAV…VLSG), 609-655 (KLYA…TWNG), 657-708 (LYAI…LLGD), and 709-754 (KLYA…VTVK).

Expressed in adrenal gland, ovary and thyroid gland and less abundantly in lymph node, prostate, spinal cord, testis and trachea.

The protein localises to the cytoplasm. The protein resides in the cytoskeleton. The polypeptide is Kelch-like protein 5 (KLHL5) (Homo sapiens (Human)).